A 365-amino-acid chain; its full sequence is Phospho-N-acetylmuramoyl-pentapeptide-transferase (365 aa).

10 helical membrane passes run 22–42 (YISV…LALG), 74–94 (TMGG…WGDL), 95–115 (TSIY…IGFF), 133–153 (YKFA…FYLL), 168–188 (SLYI…IING), 201–221 (GLAI…AYIE), 240–260 (LAEV…FLWF), 267–287 (VFMG…IAVM), 292–312 (LIFF…MLQV), and 342–362 (KVVI…LAAI).

This sequence belongs to the glycosyltransferase 4 family. MraY subfamily. Requires Mg(2+) as cofactor.

It localises to the cell inner membrane. The enzyme catalyses UDP-N-acetyl-alpha-D-muramoyl-L-alanyl-gamma-D-glutamyl-meso-2,6-diaminopimeloyl-D-alanyl-D-alanine + di-trans,octa-cis-undecaprenyl phosphate = di-trans,octa-cis-undecaprenyl diphospho-N-acetyl-alpha-D-muramoyl-L-alanyl-D-glutamyl-meso-2,6-diaminopimeloyl-D-alanyl-D-alanine + UMP. It functions in the pathway cell wall biogenesis; peptidoglycan biosynthesis. Catalyzes the initial step of the lipid cycle reactions in the biosynthesis of the cell wall peptidoglycan: transfers peptidoglycan precursor phospho-MurNAc-pentapeptide from UDP-MurNAc-pentapeptide onto the lipid carrier undecaprenyl phosphate, yielding undecaprenyl-pyrophosphoryl-MurNAc-pentapeptide, known as lipid I. This chain is Phospho-N-acetylmuramoyl-pentapeptide-transferase, found in Francisella tularensis subsp. tularensis (strain WY96-3418).